A 90-amino-acid polypeptide reads, in one-letter code: Small ribosomal subunit protein bS20 (90 aa).

This sequence belongs to the bacterial ribosomal protein bS20 family.

In terms of biological role, binds directly to 16S ribosomal RNA. This Nautilia profundicola (strain ATCC BAA-1463 / DSM 18972 / AmH) protein is Small ribosomal subunit protein bS20.